Consider the following 745-residue polypeptide: Phosphoribosylformylglycinamidine synthase subunit PurL (745 aa).

The active site involves H54. ATP is bound by residues Y57 and K96. Position 98 (E98) interacts with Mg(2+). Residues 99–102 (SHNH) and R121 each bind substrate. H100 (proton acceptor) is an active-site residue. D122 contributes to the Mg(2+) binding site. Q250 contacts substrate. A Mg(2+)-binding site is contributed by D278. 322-324 (ESQ) is a substrate binding site. The ATP site is built by D503 and G540. A Mg(2+)-binding site is contributed by N541. S543 serves as a coordination point for substrate.

The protein belongs to the FGAMS family. In terms of assembly, monomer. Part of the FGAM synthase complex composed of 1 PurL, 1 PurQ and 2 PurS subunits.

Its subcellular location is the cytoplasm. The catalysed reaction is N(2)-formyl-N(1)-(5-phospho-beta-D-ribosyl)glycinamide + L-glutamine + ATP + H2O = 2-formamido-N(1)-(5-O-phospho-beta-D-ribosyl)acetamidine + L-glutamate + ADP + phosphate + H(+). The protein operates within purine metabolism; IMP biosynthesis via de novo pathway; 5-amino-1-(5-phospho-D-ribosyl)imidazole from N(2)-formyl-N(1)-(5-phospho-D-ribosyl)glycinamide: step 1/2. In terms of biological role, part of the phosphoribosylformylglycinamidine synthase complex involved in the purines biosynthetic pathway. Catalyzes the ATP-dependent conversion of formylglycinamide ribonucleotide (FGAR) and glutamine to yield formylglycinamidine ribonucleotide (FGAM) and glutamate. The FGAM synthase complex is composed of three subunits. PurQ produces an ammonia molecule by converting glutamine to glutamate. PurL transfers the ammonia molecule to FGAR to form FGAM in an ATP-dependent manner. PurS interacts with PurQ and PurL and is thought to assist in the transfer of the ammonia molecule from PurQ to PurL. The protein is Phosphoribosylformylglycinamidine synthase subunit PurL of Helicobacter hepaticus (strain ATCC 51449 / 3B1).